The following is a 344-amino-acid chain: Dihydroorotate dehydrogenase (quinone) (344 aa).

Residues 61 to 65 (AGLDK) and Thr-85 contribute to the FMN site. Lys-65 lines the substrate pocket. 110-114 (NRMGF) is a binding site for substrate. Positions 138 and 171 each coordinate FMN. Residue Asn-171 coordinates substrate. Ser-174 serves as the catalytic Nucleophile. Asn-176 lines the substrate pocket. Residues Lys-216 and Thr-244 each coordinate FMN. 245–246 (NT) is a substrate binding site. FMN contacts are provided by residues Gly-267, Gly-296, and 317–318 (YS).

This sequence belongs to the dihydroorotate dehydrogenase family. Type 2 subfamily. As to quaternary structure, monomer. FMN is required as a cofactor.

Its subcellular location is the cell membrane. It catalyses the reaction (S)-dihydroorotate + a quinone = orotate + a quinol. Its pathway is pyrimidine metabolism; UMP biosynthesis via de novo pathway; orotate from (S)-dihydroorotate (quinone route): step 1/1. Functionally, catalyzes the conversion of dihydroorotate to orotate with quinone as electron acceptor. This is Dihydroorotate dehydrogenase (quinone) from Psychrobacter cryohalolentis (strain ATCC BAA-1226 / DSM 17306 / VKM B-2378 / K5).